The chain runs to 191 residues: Ribonuclease MC (191 aa).

Gln-9 contacts RNA. Residues Cys-15 and Cys-23 are joined by a disulfide bond. RNA is bound by residues His-34, 72-73 (NV), Arg-75, Phe-81, 84-85 (HE), and 88-89 (KH). Residue His-34 is the Proton donor of the active site. Disulfide bonds link Cys-48-Cys-92, Cys-152-Cys-185, and Cys-169-Cys-180. The active site involves Glu-85. His-89 (proton acceptor) is an active-site residue.

The protein belongs to the RNase T2 family.

The enzyme catalyses a ribonucleotidyl-ribonucleotide-RNA + H2O = a 3'-end 3'-phospho-ribonucleotide-RNA + a 5'-end dephospho-ribonucleoside-RNA + H(+). Functionally, ribonuclease cleaving preferentially the 5'-side of uridine. The polypeptide is Ribonuclease MC (Momordica charantia (Bitter gourd)).